The sequence spans 118 residues: Basic phospholipase A2 2 (118 aa).

Cystine bridges form between cysteine 11–cysteine 71, cysteine 27–cysteine 117, cysteine 29–cysteine 45, cysteine 44–cysteine 98, cysteine 51–cysteine 91, cysteine 60–cysteine 84, and cysteine 78–cysteine 89. Residues tyrosine 28, glycine 30, and glycine 32 each contribute to the Ca(2+) site. Histidine 48 is an active-site residue. Residue aspartate 49 participates in Ca(2+) binding. Residue aspartate 92 is part of the active site.

It belongs to the phospholipase A2 family. Group I subfamily. D49 sub-subfamily. Requires Ca(2+) as cofactor. In terms of tissue distribution, expressed by the venom gland.

It localises to the secreted. It carries out the reaction a 1,2-diacyl-sn-glycero-3-phosphocholine + H2O = a 1-acyl-sn-glycero-3-phosphocholine + a fatty acid + H(+). Snake venom phospholipase A2 (PLA2) that inhibits neuromuscular transmission by blocking acetylcholine release from the nerve termini. PLA2 catalyzes the calcium-dependent hydrolysis of the 2-acyl groups in 3-sn-phosphoglycerides. This chain is Basic phospholipase A2 2, found in Laticauda colubrina (Yellow-lipped sea krait).